Here is a 660-residue protein sequence, read N- to C-terminus: Bifunctional polymyxin resistance protein ArnA (660 aa).

Positions 1–304 (MKTVVFAYHD…TLGLVQGSRL (304 aa)) are formyltransferase ArnAFT. 86 to 88 (HLI) lines the (6R)-10-formyltetrahydrofolate pocket. His104 acts as the Proton donor; for formyltransferase activity in catalysis. (6R)-10-formyltetrahydrofolate is bound by residues Arg114 and 136 to 140 (VKRAD). The tract at residues 314–660 (RRTRVLILGV…RTVDLTDKPS (347 aa)) is dehydrogenase ArnADH. Residues Asp347 and 368 to 369 (DI) contribute to the NAD(+) site. UDP-alpha-D-glucuronate is bound by residues Ala393, Tyr398, and 432 to 433 (TS). Glu434 functions as the Proton acceptor; for decarboxylase activity in the catalytic mechanism. UDP-alpha-D-glucuronate-binding positions include Arg460, Asn492, 526–535 (KLIDGGKQKR), and Tyr613. Arg619 serves as the catalytic Proton donor; for decarboxylase activity.

The protein in the N-terminal section; belongs to the Fmt family. UDP-L-Ara4N formyltransferase subfamily. This sequence in the C-terminal section; belongs to the NAD(P)-dependent epimerase/dehydratase family. UDP-glucuronic acid decarboxylase subfamily. In terms of assembly, homohexamer, formed by a dimer of trimers.

The enzyme catalyses UDP-alpha-D-glucuronate + NAD(+) = UDP-beta-L-threo-pentopyranos-4-ulose + CO2 + NADH. It carries out the reaction UDP-4-amino-4-deoxy-beta-L-arabinose + (6R)-10-formyltetrahydrofolate = UDP-4-deoxy-4-formamido-beta-L-arabinose + (6S)-5,6,7,8-tetrahydrofolate + H(+). Its pathway is nucleotide-sugar biosynthesis; UDP-4-deoxy-4-formamido-beta-L-arabinose biosynthesis; UDP-4-deoxy-4-formamido-beta-L-arabinose from UDP-alpha-D-glucuronate: step 1/3. It participates in nucleotide-sugar biosynthesis; UDP-4-deoxy-4-formamido-beta-L-arabinose biosynthesis; UDP-4-deoxy-4-formamido-beta-L-arabinose from UDP-alpha-D-glucuronate: step 3/3. It functions in the pathway bacterial outer membrane biogenesis; lipopolysaccharide biosynthesis. Bifunctional enzyme that catalyzes the oxidative decarboxylation of UDP-glucuronic acid (UDP-GlcUA) to UDP-4-keto-arabinose (UDP-Ara4O) and the addition of a formyl group to UDP-4-amino-4-deoxy-L-arabinose (UDP-L-Ara4N) to form UDP-L-4-formamido-arabinose (UDP-L-Ara4FN). The modified arabinose is attached to lipid A and is required for resistance to polymyxin and cationic antimicrobial peptides. The polypeptide is Bifunctional polymyxin resistance protein ArnA (Escherichia coli O1:K1 / APEC).